The chain runs to 150 residues: FCS-Like Zinc finger 15 (150 aa).

Low complexity predominate over residues 12-28; it reads NNNNNNNNNNNNNNNKN. The tract at residues 12-31 is disordered; it reads NNNNNNNNNNNNNNNKNPLS. The FLZ-type zinc-finger motif lies at 67–111; the sequence is GFLEHCFLCRRKLLPAKDIYMYKGDRAFCSVECRSKQMIMDEEES. The interval 129–150 is disordered; that stretch reads SPATAPSRYRRDPRNQAGGFAY.

The protein belongs to the FLZ family. In terms of assembly, interacts with KIN10 and KIN11 via its FLZ-type zinc finger domain. Interacts with KINB1 and KINB3 via its N-terminal part. Forms homodimer and heterodimer with FLZ1, FLZ2 and FLZ7 in vitro.

Its subcellular location is the cytoplasm. It is found in the P-body. In terms of biological role, may act as an adapter to facilitate the interaction of SnRK1 complex with effector proteins, conferring tissue- and stimulus-type specific differences in the SnRK1 regulation pathway. The chain is FCS-Like Zinc finger 15 from Arabidopsis thaliana (Mouse-ear cress).